A 263-amino-acid chain; its full sequence is uncharacterized protein (263 aa).

ATP is bound at residue 31-38 (GPTGSGKT).

The protein belongs to the CbbQ/NirQ/NorQ/GpvN family.

This is an uncharacterized protein from Staphylococcus aureus (strain USA300).